Consider the following 267-residue polypeptide: Very long chain fatty acid elongase 6 (267 aa).

N-linked (GlcNAc...) asparagine glycosylation is present at Asn-2. Helical transmembrane passes span 34-51 (FLFSALYAAFIFGGRHLM), 70-90 (LAVFSIFGALRTGAYMLYILM), 111-131 (FWAYAFVLSKAPELGDTIFII), 136-156 (KLIFLHWYHHITVLLYSWYSY), 159-179 (MVAGGGWFMTMNYGVHAVMYS), 197-217 (FITLSQITQMLMGCVINYLVF), and 234-254 (IFWSSLMYLSYLVLFCHFFFE).

It belongs to the ELO family. ELOVL6 subfamily. N-Glycosylated. In terms of tissue distribution, highly expressed in adrenal gland, liver, white adipose tissue (WAT), adult and fetal brain, cerebellum, spinal cord, testis, skin and peripheral nerve; where lipogenesis and steroidogenesis are active. Weakly expressed in kidney, heart, skeletal muscle, lung, and spleen.

It is found in the endoplasmic reticulum membrane. The enzyme catalyses a very-long-chain acyl-CoA + malonyl-CoA + H(+) = a very-long-chain 3-oxoacyl-CoA + CO2 + CoA. The catalysed reaction is hexadecanoyl-CoA + malonyl-CoA + H(+) = 3-oxooctadecanoyl-CoA + CO2 + CoA. It catalyses the reaction (9Z)-hexadecenoyl-CoA + malonyl-CoA + H(+) = 3-oxo-(11Z)-octadecenoyl-CoA + CO2 + CoA. It carries out the reaction dodecanoyl-CoA + malonyl-CoA + H(+) = 3-oxotetradecanoyl-CoA + CO2 + CoA. The enzyme catalyses tetradecanoyl-CoA + malonyl-CoA + H(+) = 3-oxohexadecanoyl-CoA + CO2 + CoA. The catalysed reaction is (9Z)-octadecenoyl-CoA + malonyl-CoA + H(+) = 3-oxo-(11Z)-eicosenoyl-CoA + CO2 + CoA. It catalyses the reaction (9Z,12Z)-octadecadienoyl-CoA + malonyl-CoA + H(+) = (11Z,14Z)-3-oxoicosa-11,14-dienoyl-CoA + CO2 + CoA. It carries out the reaction (9Z,12Z,15Z)-octadecatrienoyl-CoA + malonyl-CoA + H(+) = (11Z,14Z,17Z)-3-oxoeicosatrienoyl-CoA + CO2 + CoA. It functions in the pathway lipid metabolism; fatty acid biosynthesis. Its activity is regulated as follows. The reaction is stimulated by the presence of HSD17B12, the enzyme catalyzing the second step of the elongation cycle. Its function is as follows. Catalyzes the first and rate-limiting reaction of the four reactions that constitute the long-chain fatty acids elongation cycle. This endoplasmic reticulum-bound enzymatic process allows the addition of 2 carbons to the chain of long- and very long-chain fatty acids (VLCFAs) per cycle. Condensing enzyme that elongates fatty acids with 12, 14 and 16 carbons with higher activity toward C16:0 acyl-CoAs. Catalyzes the synthesis of unsaturated C16 long chain fatty acids and, to a lesser extent, C18:0 and those with low desaturation degree. May participate in the production of saturated and monounsaturated VLCFAs of different chain lengths that are involved in multiple biological processes as precursors of membrane lipids and lipid mediators. In Mus musculus (Mouse), this protein is Very long chain fatty acid elongase 6.